The chain runs to 728 residues: Polyribonucleotide nucleotidyltransferase (728 aa).

Asp513 and Asp519 together coordinate Mg(2+). Positions 580–640 constitute a KH domain; that stretch reads PKVKMILIKP…EIVDLTVTYI (61 aa). The 75-residue stretch at 650-724 folds into the S1 motif domain; sequence ENVYEVKILR…ERGQIDLSKK (75 aa).

It belongs to the polyribonucleotide nucleotidyltransferase family. Mg(2+) serves as cofactor.

The protein localises to the cytoplasm. It carries out the reaction RNA(n+1) + phosphate = RNA(n) + a ribonucleoside 5'-diphosphate. In terms of biological role, involved in mRNA degradation. Catalyzes the phosphorolysis of single-stranded polyribonucleotides processively in the 3'- to 5'-direction. The sequence is that of Polyribonucleotide nucleotidyltransferase from Phytoplasma mali (strain AT).